Here is an 806-residue protein sequence, read N- to C-terminus: Leucine--tRNA ligase (806 aa).

The 'HIGH' region motif lies at 40 to 51; that stretch reads PYPSGKGLHVGH. The 'KMSKS' region motif lies at 580–584; that stretch reads KMSKS. Lys-583 is an ATP binding site.

It belongs to the class-I aminoacyl-tRNA synthetase family.

It is found in the cytoplasm. The catalysed reaction is tRNA(Leu) + L-leucine + ATP = L-leucyl-tRNA(Leu) + AMP + diphosphate. The sequence is that of Leucine--tRNA ligase from Ureaplasma parvum serovar 3 (strain ATCC 27815 / 27 / NCTC 11736).